The following is a 323-amino-acid chain: MGLFDRGVQMLLTTVGAFAAFSLMTIAVGTDYWLYSRGVCKTKSVSENETSKKNEEVMTHSGLWRTCCLEGNFKGLCKQIDHFPEDADYEADTAEYFLRAVRASSIFPILSVILLFMGGLCIAASEFYKTRHNIILSAGIFFVSAGLSNIIGIIVYISANAGDPSKSDSKKNSYSYGWSFYFGALSFIIAEMVGVLAVHMFIDRHKQLRATARATDYLQASAITRIPSYRYRYQRRSRSSSRSTEPSHSRDASPVGVKGFNTLPSTEISMYTLSRDPLKAATTPTATYNSDRDNSFLQVHNCIQKDSKDSLHANTANRRTTPV.

A helical transmembrane segment spans residues 10-30 (MLLTTVGAFAAFSLMTIAVGT). An N-linked (GlcNAc...) asparagine glycan is attached at Asn-48. 3 helical membrane-spanning segments follow: residues 104 to 124 (SSIF…CIAA), 134 to 154 (IILS…IGII), and 182 to 202 (FGAL…HMFI). Positions 233–261 (YQRRSRSSSRSTEPSHSRDASPVGVKGFN) are disordered. At Ser-253 the chain carries Phosphoserine. Tyr-271 bears the Phosphotyrosine mark. Thr-321 is modified (phosphothreonine; by PKA).

It belongs to the PMP-22/EMP/MP20 family. CACNG subfamily. As to quaternary structure, the L-type calcium channel is composed of five subunits: alpha-1, alpha-2/delta, beta and gamma. Interacts with the PDZ domains of DLG4/PSD-95 and DLG1/SAP97. May interact with GOPC. Acts as an auxiliary subunit for AMPA-selective glutamate receptors (AMPARs). Found in a complex with GRIA1, GRIA2, GRIA3, GRIA4, CNIH2, CNIH3, CACNG3, CACNG4, CACNG5, CACNG7 and CACNG8. Interacts with GRIA1 and GRIA2. Interacts with MPP2. In terms of processing, phosphorylation of Thr-321 by PKA impairs interaction with DLG1 and DLG4. Brain.

Its subcellular location is the membrane. The protein resides in the synapse. It is found in the synaptosome. Its function is as follows. Regulates the trafficking and gating properties of AMPA-selective glutamate receptors (AMPARs). Promotes their targeting to the cell membrane and synapses and modulates their gating properties by slowing their rates of activation, deactivation and desensitization. Does not show subunit-specific AMPA receptor regulation and regulates all AMPAR subunits. Thought to stabilize the calcium channel in an inactivated (closed) state. In Mus musculus (Mouse), this protein is Voltage-dependent calcium channel gamma-2 subunit (Cacng2).